Here is a 468-residue protein sequence, read N- to C-terminus: Sorting and assembly machinery component 50 homolog A (468 aa).

The segment at M1–D24 is disordered. In terms of domain architecture, POTRA spans V44–L124.

It belongs to the SAM50/omp85 family. In terms of assembly, associates with the mitochondrial contact site and cristae organizing system (MICOS) complex (also known as MINOS or MitOS complex).

The protein resides in the mitochondrion outer membrane. Its function is as follows. May play a role in the maintenance of the structure of mitochondrial cristae. This Xenopus laevis (African clawed frog) protein is Sorting and assembly machinery component 50 homolog A (samm50-a).